The primary structure comprises 156 residues: MKVLIIFACLVVMASAVCNRLEQILVKTQWAQSYGEAENRAAFSRDLFSELFNIQGSSRALFSGVGVDDMNSAAFTAHCLRVTGALNRLISQLDQQATINADLAHLAGQHASRNLDASNFAAMGQAVMSVVPTHLDCFNQHAWGECYERIASGISG.

Residues 1 to 16 form the signal peptide; that stretch reads MKVLIIFACLVVMASA. The 140-residue stretch at 17-156 folds into the Globin domain; that stretch reads VCNRLEQILV…YERIASGISG (140 aa). Cys18 and Cys146 are oxidised to a cystine. Cys79 is a hydrogen sulfide binding site. His110 lines the heme b pocket.

Belongs to the globin family. The 400 kDa hemoglobin consists of a spherical 24-mer arranged as a double layer of dome-shaped dodecamers. Each dodecamer is composed of the 3-fold trimer of the tetramer A1-A2-B1-B2 having one intra-tetramer (A1-B2) disulfide bond and one inter-tetramer (B1-B2) disulfide bond per tetramer.

The protein resides in the secreted. Its function is as follows. The extracellular giant hemoglobin is able to bind and transport oxygen and hydrosulfide simultaneously and reversibly at two different sites. The protein is Extracellular giant hemoglobin major globin subunit A1 (ghbA1) of Oligobrachia mashikoi (Beard worm).